The primary structure comprises 409 residues: Glycosaminoglycan xylosylkinase (409 aa).

Over 1–6 the chain is Cytoplasmic; the sequence is MKLKQR. A helical; Signal-anchor for type II membrane protein transmembrane segment spans residues 7–25; that stretch reads VVLLAILLVIFIFTKVFLI. The Lumenal segment spans residues 26-409; it reads DNLDTSAANR…VEDRMPLSHL (384 aa). Positions 107 and 123 each coordinate ATP. D142 is a Mn(2+) binding site. An N-linked (GlcNAc...) asparagine glycan is attached at N193. 2 disulfide bridges follow: C196-C211 and C201-C204. Residue 222-225 participates in ATP binding; it reads TLWL. Disulfide bonds link C257–C331 and C332–C389. D289 is a catalytic residue. 2 residues coordinate ATP: E294 and D309. D309 contributes to the Mn(2+) binding site.

It belongs to the FAM20 family. It depends on Mn(2+) as a cofactor. As to expression, widely expressed. Strongly expressed in pancreas, spleen and fetal liver.

It is found in the golgi apparatus membrane. It catalyses the reaction 3-O-(beta-D-galactosyl-(1-&gt;3)-beta-D-galactosyl-(1-&gt;4)-beta-D-xylosyl)-L-seryl-[protein] + ATP = 3-O-(beta-D-galactosyl-(1-&gt;3)-beta-D-galactosyl-(1-&gt;4)-beta-D-2-O-phosphoxylosyl)-L-seryl-[protein] + ADP + H(+). Responsible for the 2-O-phosphorylation of xylose in the glycosaminoglycan-protein linkage region of proteoglycans thereby regulating the amount of mature GAG chains. Sulfated glycosaminoglycans (GAGs), including heparan sulfate and chondroitin sulfate, are synthesized on the so-called common GAG-protein linkage region (GlcUAbeta1-3Galbeta1-3Galbeta1-4Xylbeta1-O-Ser) of core proteins, which is formed by the stepwise addition of monosaccharide residues by the respective specific glycosyltransferases. Xylose 2-O-phosphorylation may influence the catalytic activity of B3GAT3 (GlcAT-I) which completes the precursor tetrasaccharide of GAG-protein linkage regions on which the repeating disaccharide region is synthesized. The protein is Glycosaminoglycan xylosylkinase of Homo sapiens (Human).